The sequence spans 156 residues: MNINATLFGELLAFIFFVWFCMKFVWPPIMGAIEERQKKIADGLAASERGEKDLELAQAKATEQLKEAKTQAAGIIEQAKKRGSQIVDEETQRAHQERENIIAQGHAEIEAERNRAKEDLRKQVAALAVAGAERILERQIDAAAQSDIVEKLVAEL.

Residues 11 to 31 (LLAFIFFVWFCMKFVWPPIMG) form a helical membrane-spanning segment.

This sequence belongs to the ATPase B chain family. As to quaternary structure, F-type ATPases have 2 components, F(1) - the catalytic core - and F(0) - the membrane proton channel. F(1) has five subunits: alpha(3), beta(3), gamma(1), delta(1), epsilon(1). F(0) has three main subunits: a(1), b(2) and c(10-14). The alpha and beta chains form an alternating ring which encloses part of the gamma chain. F(1) is attached to F(0) by a central stalk formed by the gamma and epsilon chains, while a peripheral stalk is formed by the delta and b chains.

It is found in the cell inner membrane. F(1)F(0) ATP synthase produces ATP from ADP in the presence of a proton or sodium gradient. F-type ATPases consist of two structural domains, F(1) containing the extramembraneous catalytic core and F(0) containing the membrane proton channel, linked together by a central stalk and a peripheral stalk. During catalysis, ATP synthesis in the catalytic domain of F(1) is coupled via a rotary mechanism of the central stalk subunits to proton translocation. Functionally, component of the F(0) channel, it forms part of the peripheral stalk, linking F(1) to F(0). The chain is ATP synthase subunit b 2 from Pseudoalteromonas atlantica (strain T6c / ATCC BAA-1087).